The chain runs to 454 residues: MPQAIVALVGKPNVGKSTLFNRLSLREKSIVHDLPGITRDRKYAKANLFSDLIVVDTPGLEFAAAGSLEFNMMQQSLVAINEANIICFVVDAITGILPIDEECANLIRKHNKQSSTILVINKTEKPIILDKSYYKLGFSESICISAKHGQGIYELGDIIQNILSEDKKINVLTTTNTKCEYNQQCPELQLAIVGRPNCGKSTFINAILNEERVLTGPESGLTRNSVEVDWKYCGQLIRLVDTAGVRKKNAVTQSCELLSVNDTFKTIRFANIVIVMIDATRGLEQQDLSIISYAVNEGRGIVLVVNKCDLIKKKEEFQKELNRLVAYSVFQIKGINPIYISAKEKFNLESVLQKCVLTYASWQKRVTTGTLNQWLAKAMSNRPLPFQSHGKRVKIKYCTQTKARPPTIKLFCNNIESIDESYKRYLINNFKLNFDIAAGVPVRLSFVKGKNPYR.

EngA-type G domains lie at 4 to 167 (AIVA…SEDK) and 188 to 363 (LQLA…ASWQ). GTP contacts are provided by residues 10 to 17 (GKPNVGKS), 56 to 60 (DTPGL), 121 to 124 (NKTE), 194 to 201 (GRPNCGKS), 241 to 245 (DTAGV), and 306 to 309 (NKCD). The 87-residue stretch at 364-450 (KRVTTGTLNQ…PVRLSFVKGK (87 aa)) folds into the KH-like domain.

It belongs to the TRAFAC class TrmE-Era-EngA-EngB-Septin-like GTPase superfamily. EngA (Der) GTPase family. Associates with the 50S ribosomal subunit.

GTPase that plays an essential role in the late steps of ribosome biogenesis. The protein is GTPase Der of Orientia tsutsugamushi (strain Boryong) (Rickettsia tsutsugamushi).